Reading from the N-terminus, the 203-residue chain is Outer-membrane lipoprotein LolB (203 aa).

Positions 1-20 are cleaved as a signal peptide; sequence MNRSRRLALLCLGVPLLLQA. Residue Cys21 is the site of N-palmitoyl cysteine attachment. Residue Cys21 is the site of S-diacylglycerol cysteine attachment.

This sequence belongs to the LolB family. As to quaternary structure, monomer.

The protein resides in the cell outer membrane. Functionally, plays a critical role in the incorporation of lipoproteins in the outer membrane after they are released by the LolA protein. The protein is Outer-membrane lipoprotein LolB of Cupriavidus taiwanensis (strain DSM 17343 / BCRC 17206 / CCUG 44338 / CIP 107171 / LMG 19424 / R1) (Ralstonia taiwanensis (strain LMG 19424)).